Here is a 172-residue protein sequence, read N- to C-terminus: Endoribonuclease YbeY (172 aa).

Positions 1-21 (MTLHVGAEPAPREDDTEDALR) are disordered. Over residues 10-21 (APREDDTEDALR) the composition is skewed to basic and acidic residues. Zn(2+) contacts are provided by His134, His138, and His144.

Belongs to the endoribonuclease YbeY family. It depends on Zn(2+) as a cofactor.

It localises to the cytoplasm. In terms of biological role, single strand-specific metallo-endoribonuclease involved in late-stage 70S ribosome quality control and in maturation of the 3' terminus of the 16S rRNA. The chain is Endoribonuclease YbeY from Burkholderia lata (strain ATCC 17760 / DSM 23089 / LMG 22485 / NCIMB 9086 / R18194 / 383).